Reading from the N-terminus, the 303-residue chain is Endo-1,3;1,4-beta-D-glucanase (303 aa).

Positions M1–L43 are cleaved as a signal peptide. N-linked (GlcNAc...) asparagine glycosylation is found at N115, N197, and N257.

Glycosylated.

The protein resides in the secreted. Functionally, plays a role in control of plant growth. Mediates specific degradation of cell wall (1,3)(1,4)-beta-D-glucans and is related to auxin-mediated growth and development of cereal coleoptiles. The sequence is that of Endo-1,3;1,4-beta-D-glucanase from Zea mays (Maize).